We begin with the raw amino-acid sequence, 271 residues long: MATH domain and coiled-coil domain-containing protein At3g27040 (271 aa).

The MATH domain maps to 7-133; that stretch reads DKKFTWVIKN…NGEVKIVAEV (127 aa). The stretch at 230 to 271 forms a coiled coil; sequence KLDWLEKKLKETGKSRLQEIEEDLKDLKVKCADMDALLDFLR.

The chain is MATH domain and coiled-coil domain-containing protein At3g27040 from Arabidopsis thaliana (Mouse-ear cress).